A 648-amino-acid polypeptide reads, in one-letter code: MGNVQTSVNTYNITGDGNSFTPTSDMTSTAAPAIDLKPGVLNPTGKLWRPVGTSVATIDSLAIVSDRFGQYSFVNEGMRETFSKALFDINMWQPLFQATKTGCGPIVLSSFTTTTSGYVGATAGDALDNPVTNGVFISTVQVMNLQRTIAARMRDVALWQQHLDTAMTMLTPDISAGSASCNWKSLLAFAKDILPLDNLCLTYPNEFYNVAIHRYPALKPGNPDTKLPDAQAHPLGEVAGAFNAATSEVGSLVGSSSTLSQAISTMAGKDLDLIEADTPLPVSVFTPSLAPRSYRPAFIKPEDAKWIAEFNNSSLIRKTLTYSGATYAVQLGPGPTRVIDMNAMIDSVLTLDVSGTILPYDTNPDLSTSVPAFVLIQTSVPIQQVTTAANITAITVVSAAGASAINLAINVRGQPRFNMLHLQATFERETITGIPYIYGLGTFLIPSPTSSSNFSNPTLMDGLLTVTPVLLRETTYKGEVVDAIVPATVMANQTSEEVASALANDAIVLVSNHLNKLANVVGDAIPVASKTDDSATSAIVSRLAVQHKLSQVGQTSPTPPDYPLLWRRAKRAASMFVSNPSLALQVGIPVLTQSGMLSALTSGVGTALRTGSLGKGVTDASEKLRARQSLTVAKQAFFDQIGSLWPGK.

A lipid anchor (N-myristoyl glycine; by host) is attached at G2. N12, N311, N312, N390, N453, and N492 each carry an N-linked (GlcNAc...) asparagine; by host glycan.

The protein belongs to the aquareoviridae outer capsid VP4 protein family. As to quaternary structure, interacts with VP6 and VP7. In terms of processing, cleaved during the endosomal proteolytic disassembly of the outer capsid. Post-translationally, N-terminally myristoylated. This acylation is essential for the membrane fusion activity.

It localises to the virion. Its function is as follows. Interacts with VP7 to form the outer icosahedral capsid with an incomplete T=13 symmetry, about 80 nm in diameter, and consisting of 200 VP4-VP7 trimers. Myristoylated N-terminal peptide may be released in the endosome and involved in permeabilization and delivery of transcriptionally active viral particles into the host cell cytoplasm (Potential). The protein is Outer capsid protein VP4 (S6) of Notemigonus crysoleucas (Golden shiner).